Reading from the N-terminus, the 529-residue chain is 1,4-beta-D-glucan cellobiohydrolase xynA (529 aa).

The first 25 residues, 1–25 (MSALNSFNMYKSALILGSLLATAGA), serve as a signal peptide directing secretion. The tract at residues 26-456 (QQIGTYTAET…SDIKVGPFNS (431 aa)) is catalytic. N-linked (GlcNAc...) asparagine glycosylation is found at Asn70 and Asn219. The Nucleophile role is filled by Glu234. Residue Glu239 is the Proton donor of the active site. A glycan (N-linked (GlcNAc...) asparagine) is linked at Asn413. The tract at residues 413-438 (NETGTPGAARGSCPTTSGNPKTVESQ) is disordered. The span at 425-438 (CPTTSGNPKTVESQ) shows a compositional bias: polar residues. Asn455 carries an N-linked (GlcNAc...) asparagine glycan. A thr-rich linker region spans residues 457-493 (TFSGGTSTGGSTTTTASGTTSTKASTTSTSSTSTGTG). The interval 460–491 (GGTSTGGSTTTTASGTTSTKASTTSTSSTSTG) is disordered. The 37-residue stretch at 493 to 529 (GVAAHWGQCGGQGWTGPTTCASGTTCTVVNPYYSQCL) folds into the CBM1 domain. Cystine bridges form between Cys501-Cys518 and Cys512-Cys528.

It belongs to the glycosyl hydrolase 7 (cellulase C) family.

The protein resides in the secreted. It carries out the reaction Hydrolysis of (1-&gt;4)-beta-D-glucosidic linkages in cellulose and cellotetraose, releasing cellobiose from the non-reducing ends of the chains.. With respect to regulation, cellobiose inhibits xynA at high concentrations. In terms of biological role, the biological conversion of cellulose to glucose generally requires three types of hydrolytic enzymes: (1) Endoglucanases which cut internal beta-1,4-glucosidic bonds; (2) Exocellobiohydrolases that cut the disaccharide cellobiose from the non-reducing end of the cellulose polymer chain; (3) Beta-1,4-glucosidases which hydrolyze the cellobiose and other short cello-oligosaccharides to glucose. The protein is 1,4-beta-D-glucan cellobiohydrolase xynA (xynA) of Talaromyces funiculosus (Fruitlet core rot fungus).